The following is a 127-amino-acid chain: MVKKFQSKLINLQFNIILTFFVYEWNHDITCLNFKVKKRRGDFYVINERFFIKYIIKKNKNPQNLTKSICNSKTSINSMRQYLATINKKLRAFVQTFLAIGGYYSITTQIVKIILITHPVLLCQCSS.

This is an uncharacterized protein from Schizosaccharomyces pombe (strain 972 / ATCC 24843) (Fission yeast).